The following is a 93-amino-acid chain: Co-chaperonin GroES (93 aa).

This sequence belongs to the GroES chaperonin family. Heptamer of 7 subunits arranged in a ring. Interacts with the chaperonin GroEL.

The protein resides in the cytoplasm. Its function is as follows. Together with the chaperonin GroEL, plays an essential role in assisting protein folding. The GroEL-GroES system forms a nano-cage that allows encapsulation of the non-native substrate proteins and provides a physical environment optimized to promote and accelerate protein folding. GroES binds to the apical surface of the GroEL ring, thereby capping the opening of the GroEL channel. This chain is Co-chaperonin GroES, found in Streptococcus sanguinis.